We begin with the raw amino-acid sequence, 956 residues long: Glycine dehydrogenase (decarboxylating) 2 (956 aa).

Lysine 706 carries the N6-(pyridoxal phosphate)lysine modification.

This sequence belongs to the GcvP family. In terms of assembly, the glycine cleavage system is composed of four proteins: P, T, L and H. Requires pyridoxal 5'-phosphate as cofactor.

The catalysed reaction is N(6)-[(R)-lipoyl]-L-lysyl-[glycine-cleavage complex H protein] + glycine + H(+) = N(6)-[(R)-S(8)-aminomethyldihydrolipoyl]-L-lysyl-[glycine-cleavage complex H protein] + CO2. Its function is as follows. The glycine cleavage system catalyzes the degradation of glycine. The P protein binds the alpha-amino group of glycine through its pyridoxal phosphate cofactor; CO(2) is released and the remaining methylamine moiety is then transferred to the lipoamide cofactor of the H protein. The polypeptide is Glycine dehydrogenase (decarboxylating) 2 (Colwellia psychrerythraea (strain 34H / ATCC BAA-681) (Vibrio psychroerythus)).